The primary structure comprises 516 residues: L-amino-acid oxidase (516 aa).

Residues 1-18 (MNVFFMFSLLFLAALGSC) form the signal peptide. Cysteine 28 and cysteine 191 form a disulfide bridge. Residues 61–62 (MA), 81–82 (EA), arginine 89, and 105–108 (GPMR) contribute to the FAD site. Arginine 108 provides a ligand contact to substrate. N-linked (GlcNAc...) (complex) asparagine glycosylation occurs at asparagine 190. Residue histidine 241 participates in substrate binding. Valine 279 serves as a coordination point for FAD. Cysteine 349 and cysteine 430 are oxidised to a cystine. N-linked (GlcNAc...) (complex) asparagine glycosylation is present at asparagine 379. Residue tyrosine 390 coordinates substrate. FAD contacts are provided by residues glutamate 475 and 482–487 (GWIDST). 482 to 483 (GW) contacts substrate.

Homodimer; non-covalently linked. FAD is required as a cofactor. In terms of processing, N-glycosylated at Asn-190 and Asn-379 with bis-sialylated, biantennary, core-fucosylated dodecasaccharide (composed of N-acetylglucosamine, fucose, mannose, galactose, and sialic acid residues). As to expression, expressed by the venom gland.

Its subcellular location is the secreted. It carries out the reaction an L-alpha-amino acid + O2 + H2O = a 2-oxocarboxylate + H2O2 + NH4(+). The catalysed reaction is L-leucine + O2 + H2O = 4-methyl-2-oxopentanoate + H2O2 + NH4(+). It catalyses the reaction L-phenylalanine + O2 + H2O = 3-phenylpyruvate + H2O2 + NH4(+). The enzyme catalyses L-tryptophan + O2 + H2O = indole-3-pyruvate + H2O2 + NH4(+). It carries out the reaction L-methionine + O2 + H2O = 4-methylsulfanyl-2-oxobutanoate + H2O2 + NH4(+). The catalysed reaction is L-isoleucine + O2 + H2O = (S)-3-methyl-2-oxopentanoate + H2O2 + NH4(+). It catalyses the reaction L-arginine + O2 + H2O = 5-guanidino-2-oxopentanoate + H2O2 + NH4(+). The enzyme catalyses L-aspartate + O2 + H2O = oxaloacetate + H2O2 + NH4(+). It carries out the reaction L-histidine + O2 + H2O = 3-(imidazol-5-yl)pyruvate + H2O2 + NH4(+). The catalysed reaction is L-2-aminohexanoate + O2 + H2O = 2-oxohexanoate + H2O2 + NH4(+). It catalyses the reaction L-2-aminopentanoate + O2 + H2O = 2-oxopentanoate + H2O2 + NH4(+). Its function is as follows. Catalyzes an oxidative deamination of predominantly hydrophobic and aromatic L-amino acids, thus producing hydrogen peroxide that may contribute to the diverse toxic effects of this enzyme. Shows high affinity for L-Phe, L-Trp, L-Met, L-Leu, and L-Ile, moderate affinity for L-Arg, L-Asp, and L-His, and very low affinity for L-Gln, L-Lys, and L-Ala. Also shows high activity on L-norleucine (L-2-aminohexanoate), and L-norvaline (L-2-aminopentanoate) and a weak activity on L-ornithine and L-aminobutyric acid. Also exhibits diverse biological activities, such as hemorrhage, hemolysis, edema, apoptosis of vascular endothelial cells or tumor cell lines, and antiparasitic activities, as well as regulation of platelet aggregation. Its effect on platelets is controversial, since it either induces aggregation or inhibits agonist-induced aggregation. These different effects are probably due to different experimental conditions. A possible explanation of high efficacy it that LAAO may bind to target cells through its sialylated glycan moiety that would bind to sialic acid-binding lectins (siglec) on target cells. This interaction may result in production of locally high concentrations of hydrogen peroxide in or near the binding interface, leading, in turn to oxidative damage of the siglec or another adjacent cell structural elements. This chain is L-amino-acid oxidase, found in Calloselasma rhodostoma (Malayan pit viper).